The primary structure comprises 1641 residues: Maestro heat-like repeat-containing protein family member 1 (1641 aa).

HEAT repeat units follow at residues Glu-3–Val-41, Val-159–Glu-198, Cys-344–Ala-382, Glu-385–Leu-423, Pro-1048–Gly-1086, Leu-1358–Asp-1396, and Gln-1605–Ala-1641.

The protein belongs to the MROH1 family. Homooligomer; homooligomerizes at lysosome scission sites.

It localises to the lysosome membrane. Functionally, lysosome fission factor. Recruited to lysosomes by RAB7 (RAB7A or RAB7B) at scission sites and homooligomerizes to mediate the constriction and scission of lysosomal tubules. May sever membranes by inserting amphipathic helices into one bilayer leaflet. Lysosome fission is required to maintain their steady-state number, shape, size, composition and function, and to accomplish regeneration. This is Maestro heat-like repeat-containing protein family member 1 from Homo sapiens (Human).